A 439-amino-acid polypeptide reads, in one-letter code: Cysteine--tRNA ligase (439 aa).

Cys-28 lines the Zn(2+) pocket. The 'HIGH' region signature appears at 30–40 (ITVYDLCHIGH). Cys-209, His-234, and Glu-238 together coordinate Zn(2+). Positions 266–270 (KMSKS) match the 'KMSKS' region motif. Lys-269 is an ATP binding site.

Belongs to the class-I aminoacyl-tRNA synthetase family. Monomer. Zn(2+) serves as cofactor.

The protein localises to the cytoplasm. The catalysed reaction is tRNA(Cys) + L-cysteine + ATP = L-cysteinyl-tRNA(Cys) + AMP + diphosphate. In Shigella boydii serotype 4 (strain Sb227), this protein is Cysteine--tRNA ligase.